A 334-amino-acid chain; its full sequence is tRNA U34 carboxymethyltransferase (334 aa).

Residues Lys91, Trp105, Lys110, Gly130, 152–154, 181–182, Met196, Tyr200, and Arg315 each bind carboxy-S-adenosyl-L-methionine; these read DPT and IE.

This sequence belongs to the class I-like SAM-binding methyltransferase superfamily. CmoB family. As to quaternary structure, homotetramer.

The catalysed reaction is carboxy-S-adenosyl-L-methionine + 5-hydroxyuridine(34) in tRNA = 5-carboxymethoxyuridine(34) in tRNA + S-adenosyl-L-homocysteine + H(+). Catalyzes carboxymethyl transfer from carboxy-S-adenosyl-L-methionine (Cx-SAM) to 5-hydroxyuridine (ho5U) to form 5-carboxymethoxyuridine (cmo5U) at position 34 in tRNAs. This chain is tRNA U34 carboxymethyltransferase, found in Klebsiella pneumoniae subsp. pneumoniae (strain ATCC 700721 / MGH 78578).